Here is a 307-residue protein sequence, read N- to C-terminus: Ribonuclease Z (307 aa).

Zn(2+) is bound by residues H63, H65, D67, H68, H140, D211, and H269. D67 functions as the Proton acceptor in the catalytic mechanism.

This sequence belongs to the RNase Z family. As to quaternary structure, homodimer. Requires Zn(2+) as cofactor.

The catalysed reaction is Endonucleolytic cleavage of RNA, removing extra 3' nucleotides from tRNA precursor, generating 3' termini of tRNAs. A 3'-hydroxy group is left at the tRNA terminus and a 5'-phosphoryl group is left at the trailer molecule.. Functionally, zinc phosphodiesterase, which displays some tRNA 3'-processing endonuclease activity. Probably involved in tRNA maturation, by removing a 3'-trailer from precursor tRNA. This Bacillus licheniformis (strain ATCC 14580 / DSM 13 / JCM 2505 / CCUG 7422 / NBRC 12200 / NCIMB 9375 / NCTC 10341 / NRRL NRS-1264 / Gibson 46) protein is Ribonuclease Z.